Consider the following 368-residue polypeptide: 3-dehydroquinate synthase (368 aa).

NAD(+) contacts are provided by residues 71-76 (DGESFK), 105-109 (GVIGD), 129-130 (TT), lysine 142, lysine 151, and 169-172 (TLRT). Zn(2+)-binding residues include glutamate 184, histidine 247, and histidine 264.

It belongs to the sugar phosphate cyclases superfamily. Dehydroquinate synthase family. Requires NAD(+) as cofactor. Co(2+) is required as a cofactor. It depends on Zn(2+) as a cofactor.

It localises to the cytoplasm. It catalyses the reaction 7-phospho-2-dehydro-3-deoxy-D-arabino-heptonate = 3-dehydroquinate + phosphate. The protein operates within metabolic intermediate biosynthesis; chorismate biosynthesis; chorismate from D-erythrose 4-phosphate and phosphoenolpyruvate: step 2/7. Functionally, catalyzes the conversion of 3-deoxy-D-arabino-heptulosonate 7-phosphate (DAHP) to dehydroquinate (DHQ). The polypeptide is 3-dehydroquinate synthase (Ralstonia nicotianae (strain ATCC BAA-1114 / GMI1000) (Ralstonia solanacearum)).